We begin with the raw amino-acid sequence, 457 residues long: 3-isopropylmalate dehydratase large subunit (457 aa).

Residues Cys337, Cys397, and Cys400 each contribute to the [4Fe-4S] cluster site.

The protein belongs to the aconitase/IPM isomerase family. LeuC type 1 subfamily. Heterodimer of LeuC and LeuD. The cofactor is [4Fe-4S] cluster.

It catalyses the reaction (2R,3S)-3-isopropylmalate = (2S)-2-isopropylmalate. The protein operates within amino-acid biosynthesis; L-leucine biosynthesis; L-leucine from 3-methyl-2-oxobutanoate: step 2/4. Functionally, catalyzes the isomerization between 2-isopropylmalate and 3-isopropylmalate, via the formation of 2-isopropylmaleate. The polypeptide is 3-isopropylmalate dehydratase large subunit (Oenococcus oeni (strain ATCC BAA-331 / PSU-1)).